A 181-amino-acid chain; its full sequence is Large ribosomal subunit protein uL5 (181 aa).

The protein belongs to the universal ribosomal protein uL5 family. Part of the 50S ribosomal subunit; contacts the 5S rRNA and probably tRNA. Forms a bridge to the 30S subunit in the 70S ribosome.

Its function is as follows. This is one of the proteins that bind and probably mediate the attachment of the 5S RNA into the large ribosomal subunit, where it forms part of the central protuberance. In the 70S ribosome it contacts protein S13 of the 30S subunit (bridge B1b), connecting the 2 subunits; this bridge is implicated in subunit movement. May contact the P site tRNA; the 5S rRNA and some of its associated proteins might help stabilize positioning of ribosome-bound tRNAs. The polypeptide is Large ribosomal subunit protein uL5 (Methanococcus maripaludis (strain C7 / ATCC BAA-1331)).